The chain runs to 487 residues: CUGBP Elav-like family member 1 (487 aa).

Methionine 1 is subject to N-acetylmethionine. Phosphothreonine is present on threonine 4. RRM domains lie at 16-99 and 108-188; these read IKMF…PADS and RKLF…FADT. Residue lysine 109 forms a Glycyl lysine isopeptide (Lys-Gly) (interchain with G-Cter in SUMO2) linkage. 2 positions are modified to phosphoserine: serine 179 and serine 303. The tract at residues 277-310 is disordered; sequence TPSGTNALTTSSSPLSVLTSSAGSSPSSSSSNSV. Residues 283-310 are compositionally biased toward low complexity; the sequence is ALTTSSSPLSVLTSSAGSSPSSSSSNSV. The RRM 3 domain maps to 402–480; that stretch reads ANLFIYHLPQ…KRLKVQLKRS (79 aa).

It belongs to the CELF/BRUNOL family. Interacts with HNRNPH1; the interaction in RNA-dependent. Interacts with PARN. Component of an EIF2 complex at least composed of CELF1/CUGBP1, CALR, CALR3, EIF2S1, EIF2S2, HSP90B1 and HSPA5. Associates with polysomes.

Its subcellular location is the nucleus. It is found in the cytoplasm. Its function is as follows. RNA-binding protein implicated in the regulation of several post-transcriptional events. Involved in pre-mRNA alternative splicing, mRNA translation and stability. Mediates exon inclusion and/or exclusion in pre-mRNA that are subject to tissue-specific and developmentally regulated alternative splicing. Specifically activates exon 5 inclusion of cardiac isoforms of TNNT2 during heart remodeling at the juvenile to adult transition. Acts both as an activator and as a repressor of a pair of coregulated exons: promotes inclusion of the smooth muscle (SM) exon but exclusion of the non-muscle (NM) exon in actinin pre-mRNAs. Activates SM exon 5 inclusion by antagonizing the repressive effect of PTB. Promotes exclusion of exon 11 of the INSR pre-mRNA. Inhibits, together with HNRNPH1, insulin receptor (IR) pre-mRNA exon 11 inclusion in myoblast. Increases translation and controls the choice of translation initiation codon of CEBPB mRNA. Increases mRNA translation of CEBPB in aging liver. Increases translation of CDKN1A mRNA by antagonizing the repressive effect of CALR3. Mediates rapid cytoplasmic mRNA deadenylation. Recruits the deadenylase PARN to the poly(A) tail of EDEN-containing mRNAs to promote their deadenylation. Required for completion of spermatogenesis. Binds to (CUG)n triplet repeats in the 3'-UTR of transcripts such as DMPK and to Bruno response elements (BREs). Binds to muscle-specific splicing enhancer (MSE) intronic sites flanking the alternative exon 5 of TNNT2 pre-mRNA. Binds to AU-rich sequences (AREs or EDEN-like) localized in the 3'-UTR of JUN and FOS mRNAs. Binds to the IR RNA. Binds to the 5'-region of CDKN1A and CEBPB mRNAs. Binds with the 5'-region of CEBPB mRNA in aging liver. May be a specific regulator of miRNA biogenesis. Binds to primary microRNA pri-MIR140 and, with CELF2, negatively regulates the processing to mature miRNA. This is CUGBP Elav-like family member 1 (Celf1) from Rattus norvegicus (Rat).